Reading from the N-terminus, the 301-residue chain is GTPase Era (301 aa).

One can recognise an Era-type G domain in the interval 6-173 (KSGFVAIVGR…LEQTNANLEI (168 aa)). Residues 14 to 21 (GRPNVGKS) form a G1 region. 14-21 (GRPNVGKS) is a binding site for GTP. The interval 40-44 (QTTRN) is G2. A G3 region spans residues 61–64 (DTPG). GTP is bound by residues 61-65 (DTPGI) and 123-126 (NKID). The interval 123 to 126 (NKID) is G4. The G5 stretch occupies residues 152–154 (ISA). A KH type-2 domain is found at 204 to 282 (TREEVPHSVA…FLEIWVKVQK (79 aa)).

This sequence belongs to the TRAFAC class TrmE-Era-EngA-EngB-Septin-like GTPase superfamily. Era GTPase family. In terms of assembly, monomer.

The protein resides in the cytoplasm. The protein localises to the cell membrane. An essential GTPase that binds both GDP and GTP, with rapid nucleotide exchange. Plays a role in 16S rRNA processing and 30S ribosomal subunit biogenesis and possibly also in cell cycle regulation and energy metabolism. The protein is GTPase Era of Listeria monocytogenes serotype 4b (strain F2365).